Here is a 692-residue protein sequence, read N- to C-terminus: Proprotein convertase subtilisin/kexin type 9 (692 aa).

A signal peptide spans 1 to 30; that stretch reads MGTVSSRRSWWPLPLPLLLLLLLGLAGARA. A propeptide spanning residues 31–152 is cleaved from the precursor; the sequence is QEDEDGDYEE…IEEDSSVFAQ (122 aa). Residue Y38 is modified to Sulfotyrosine. S47 carries the post-translational modification Phosphoserine. Positions 77 to 149 constitute an Inhibitor I9 domain; that stretch reads TYVVVLKEET…VDYIEEDSSV (73 aa). Residues 155 to 444 enclose the Peptidase S8 domain; it reads PWNLERITPA…VLTPNLVAAL (290 aa). Catalysis depends on charge relay system residues D186 and H226. 2 disulfides stabilise this stretch: C223-C255 and C323-C358. The active-site Charge relay system is S386. The segment at 450–692 is C-terminal domain; it reads RAGWQLFCRT…HLVQASQELQ (243 aa). Intrachain disulfides connect C457-C527, C477-C526, and C486-C509. N533 carries N-linked (GlcNAc...) asparagine glycosylation. 6 disulfide bridges follow: C534/C601, C552/C600, C562/C588, C608/C679, C626/C678, and C635/C654. S688 is modified (phosphoserine).

The protein belongs to the peptidase S8 family. Monomer. Can self-associate to form dimers and higher multimers which may have increased LDLR degrading activity. The precursor protein but not the mature protein may form multimers. Interacts with APOB, VLDLR, LRP8/APOER2 and BACE1. The full-length immature form (pro-PCSK9) interacts with SCNN1A, SCNN1B and SCNN1G. The pro-PCSK9 form (via C-terminal domain) interacts with LDLR. Interacts (via the C-terminal domain) with ANXA2 (via repeat Annexin 1); the interaction inhibits the degradation of LDLR. Ca(2+) is required as a cofactor. In terms of processing, cleavage by furin and PCSK5 generates a truncated inactive protein that is unable to induce LDLR degradation. Post-translationally, undergoes autocatalytic cleavage in the endoplasmic reticulum to release the propeptide from the N-terminus and the cleavage of the propeptide is strictly required for its maturation and activation. The cleaved propeptide however remains associated with the catalytic domain through non-covalent interactions, preventing potential substrates from accessing its active site. As a result, it is secreted from cells as a propeptide-containing, enzymatically inactive protein. Phosphorylation protects the propeptide against proteolysis.

Its subcellular location is the cytoplasm. The protein localises to the secreted. It localises to the endosome. It is found in the lysosome. The protein resides in the cell surface. Its subcellular location is the endoplasmic reticulum. The protein localises to the golgi apparatus. With respect to regulation, its proteolytic activity is autoinhibited by the non-covalent binding of the propeptide to the catalytic domain. Inhibited by EGTA. In terms of biological role, crucial player in the regulation of plasma cholesterol homeostasis. Binds to low-density lipid receptor family members: low density lipoprotein receptor (LDLR), very low density lipoprotein receptor (VLDLR), apolipoprotein E receptor (LRP1/APOER) and apolipoprotein receptor 2 (LRP8/APOER2), and promotes their degradation in intracellular acidic compartments. Acts via a non-proteolytic mechanism to enhance the degradation of the hepatic LDLR through a clathrin LDLRAP1/ARH-mediated pathway. May prevent the recycling of LDLR from endosomes to the cell surface or direct it to lysosomes for degradation. Can induce ubiquitination of LDLR leading to its subsequent degradation. Inhibits intracellular degradation of APOB via the autophagosome/lysosome pathway in a LDLR-independent manner. Involved in the disposal of non-acetylated intermediates of BACE1 in the early secretory pathway. Inhibits epithelial Na(+) channel (ENaC)-mediated Na(+) absorption by reducing ENaC surface expression primarily by increasing its proteasomal degradation. Regulates neuronal apoptosis via modulation of LRP8/APOER2 levels and related anti-apoptotic signaling pathways. The sequence is that of Proprotein convertase subtilisin/kexin type 9 (PCSK9) from Colobus guereza (Mantled guereza).